We begin with the raw amino-acid sequence, 204 residues long: Large ribosomal subunit protein uL4 (204 aa).

A disordered region spans residues 49–76 (KTKGISDVSGTTAKPYGQKRTGRARQGS).

It belongs to the universal ribosomal protein uL4 family. Part of the 50S ribosomal subunit.

Functionally, one of the primary rRNA binding proteins, this protein initially binds near the 5'-end of the 23S rRNA. It is important during the early stages of 50S assembly. It makes multiple contacts with different domains of the 23S rRNA in the assembled 50S subunit and ribosome. In terms of biological role, forms part of the polypeptide exit tunnel. This Wolbachia pipientis wMel protein is Large ribosomal subunit protein uL4.